A 438-amino-acid polypeptide reads, in one-letter code: UDP-N-acetylglucosamine 1-carboxyvinyltransferase (438 aa).

Lysine 35–asparagine 36 contributes to the phosphoenolpyruvate binding site. Arginine 105 is a UDP-N-acetyl-alpha-D-glucosamine binding site. Cysteine 129 functions as the Proton donor in the catalytic mechanism. Cysteine 129 carries the post-translational modification 2-(S-cysteinyl)pyruvic acid O-phosphothioketal. Residues arginine 134 to leucine 138, aspartate 321, and valine 343 contribute to the UDP-N-acetyl-alpha-D-glucosamine site.

It belongs to the EPSP synthase family. MurA subfamily.

Its subcellular location is the cytoplasm. The enzyme catalyses phosphoenolpyruvate + UDP-N-acetyl-alpha-D-glucosamine = UDP-N-acetyl-3-O-(1-carboxyvinyl)-alpha-D-glucosamine + phosphate. The protein operates within cell wall biogenesis; peptidoglycan biosynthesis. Cell wall formation. Adds enolpyruvyl to UDP-N-acetylglucosamine. This Synechocystis sp. (strain ATCC 27184 / PCC 6803 / Kazusa) protein is UDP-N-acetylglucosamine 1-carboxyvinyltransferase.